Here is a 521-residue protein sequence, read N- to C-terminus: Cyclic AMP-responsive element-binding protein 3-like protein 2 (521 aa).

The Cytoplasmic segment spans residues 1–378; sequence MEVLESGEQS…CKLAGTQTGT (378 aa). Residue serine 93 is modified to Phosphoserine. A Glycyl lysine isopeptide (Lys-Gly) (interchain with G-Cter in SUMO2) cross-link involves residue lysine 178. The residue at position 191 (serine 191) is a Phosphoserine. Positions 196-264 are disordered; it reads SVDQLHLPPT…PHKLQGSGPL (69 aa). The segment covering 208–220 has biased composition (low complexity); the sequence is SSHSSDSEGSLSP. The bZIP domain occupies 294–357; that stretch reads ALKKIRRKIK…RTLLQQLQKL (64 aa). The interval 296–325 is basic motif; it reads KKIRRKIKNKISAQESRRKKKEYMDSLEKK. Residues 336–357 are leucine-zipper; that stretch reads LRKKVEVLENTNRTLLQQLQKL. Residues 379-399 traverse the membrane as a helical; Signal-anchor for type II membrane protein segment; the sequence is CLMVVVLCFAVAFGSLFQGYG. The Lumenal portion of the chain corresponds to 400 to 521; the sequence is LYPSATKMAL…ELERRVNATF (122 aa). The short motif at 427-430 is the S1P recognition element; sequence RNLL. N-linked (GlcNAc...) asparagine glycans are attached at residues asparagine 505 and asparagine 518.

Belongs to the bZIP family. ATF subfamily. Binds DNA as a dimer. Post-translationally, upon ER stress, translocated to the Golgi apparatus, where it is processed by regulated intramembrane proteolysis (RIP) to release the cytosol-facing N-terminal transcription factor domain. The cleavage is performed sequentially by site-1 and site-2 proteases (S1P/MBTPS1 and S2P/MBTPS2). N-glycosylated. In terms of processing, ubiquitinated by HRD1/SYVN1; undergoes 'Lys-48'-linked ubiquitination, followed by rapid proteasomal degradation under normal conditions. Upon ER stress, SYVN1 E3 ubiquitin-protein ligase dissociates from its substrate, ubiquitination does not occur and CREB3L2 is stabilized.

Its subcellular location is the endoplasmic reticulum membrane. It is found in the nucleus. Transcription factor involved in unfolded protein response (UPR). In the absence of endoplasmic reticulum (ER) stress, inserted into ER membranes, with N-terminal DNA-binding and transcription activation domains oriented toward the cytosolic face of the membrane. In response to ER stress, transported to the Golgi, where it is cleaved in a site-specific manner by resident proteases S1P/MBTPS1 and S2P/MBTPS2. The released N-terminal cytosolic domain is translocated to the nucleus to effect transcription of specific target genes. Plays a critical role in chondrogenesis by activating the transcription of SEC23A, which promotes the transport and secretion of cartilage matrix proteins, and possibly that of ER biogenesis-related genes. In a neuroblastoma cell line, protects cells from ER stress-induced death. In vitro activates transcription of target genes via direct binding to the CRE site. This Rattus norvegicus (Rat) protein is Cyclic AMP-responsive element-binding protein 3-like protein 2 (Creb3l2).